We begin with the raw amino-acid sequence, 212 residues long: Ribosomal RNA large subunit methyltransferase E (212 aa).

The disordered stretch occupies residues 1 to 26 (MPAERPSVSQKPKNPYKRPDAFTKAA). Residues Gly63, Trp65, Asp83, Asp101, and Asp122 each coordinate S-adenosyl-L-methionine. The Proton acceptor role is filled by Lys162.

Belongs to the class I-like SAM-binding methyltransferase superfamily. RNA methyltransferase RlmE family.

It is found in the cytoplasm. The enzyme catalyses uridine(2552) in 23S rRNA + S-adenosyl-L-methionine = 2'-O-methyluridine(2552) in 23S rRNA + S-adenosyl-L-homocysteine + H(+). In terms of biological role, specifically methylates the uridine in position 2552 of 23S rRNA at the 2'-O position of the ribose in the fully assembled 50S ribosomal subunit. This chain is Ribosomal RNA large subunit methyltransferase E, found in Sorangium cellulosum (strain So ce56) (Polyangium cellulosum (strain So ce56)).